Reading from the N-terminus, the 735-residue chain is Exocyst complex component 7 (735 aa).

2 coiled-coil regions span residues 5-42 (QEAS…TKNM) and 63-85 (VHKQ…SCLD). Ser133 is modified (phosphoserine). The tract at residues 239 to 268 (HKSSSSSGVPYSPAIPNKRKDTPTKKPVKR) is disordered.

The protein belongs to the EXO70 family. In terms of assembly, the exocyst complex is composed of EXOC1, EXOC2, EXOC3, EXOC4, EXOC5, EXOC6, EXOC7 and EXOC8. Interacts with ARHQ in a GTP-dependent manner. Interacts with RAB11FIP3. Abundant in the ventricular zone, the outer subventricular zone and the cortical plate of the fetal cortex.

It is found in the cytoplasm. Its subcellular location is the cytosol. It localises to the cell membrane. The protein localises to the midbody. The protein resides in the midbody ring. Functionally, component of the exocyst complex involved in the docking of exocytic vesicles with fusion sites on the plasma membrane. In adipocytes, plays a crucial role in targeting SLC2A4 vesicle to the plasma membrane in response to insulin, perhaps directing the vesicle to the precise site of fusion. It is required for neuron survival and plays an essential role in cortical development. The chain is Exocyst complex component 7 (EXOC7) from Homo sapiens (Human).